The sequence spans 242 residues: Biosynthetic peptidoglycan transglycosylase (242 aa).

The helical transmembrane segment at 19-39 (ILAALAVFWGGGIALFSVVPV) threads the bilayer.

Belongs to the glycosyltransferase 51 family.

It is found in the cell inner membrane. The catalysed reaction is [GlcNAc-(1-&gt;4)-Mur2Ac(oyl-L-Ala-gamma-D-Glu-L-Lys-D-Ala-D-Ala)](n)-di-trans,octa-cis-undecaprenyl diphosphate + beta-D-GlcNAc-(1-&gt;4)-Mur2Ac(oyl-L-Ala-gamma-D-Glu-L-Lys-D-Ala-D-Ala)-di-trans,octa-cis-undecaprenyl diphosphate = [GlcNAc-(1-&gt;4)-Mur2Ac(oyl-L-Ala-gamma-D-Glu-L-Lys-D-Ala-D-Ala)](n+1)-di-trans,octa-cis-undecaprenyl diphosphate + di-trans,octa-cis-undecaprenyl diphosphate + H(+). It participates in cell wall biogenesis; peptidoglycan biosynthesis. In terms of biological role, peptidoglycan polymerase that catalyzes glycan chain elongation from lipid-linked precursors. The sequence is that of Biosynthetic peptidoglycan transglycosylase from Salmonella paratyphi B (strain ATCC BAA-1250 / SPB7).